Reading from the N-terminus, the 765-residue chain is 5-methyltetrahydropteroyltriglutamate--homocysteine methyltransferase (765 aa).

5-methyltetrahydropteroyltri-L-glutamate contacts are provided by residues 18–21 and Lys114; that span reads REWK. L-homocysteine-binding positions include 437-439 and Glu490; that span reads IGS. L-methionine-binding positions include 437–439 and Glu490; that span reads IGS. Trp567 serves as a coordination point for 5-methyltetrahydropteroyltri-L-glutamate. Asp605 is an L-homocysteine binding site. Asp605 contributes to the L-methionine binding site. Glu611 contributes to the 5-methyltetrahydropteroyltri-L-glutamate binding site. The Zn(2+) site is built by His647, Cys649, and Glu671. The active-site Proton donor is the His700. Zn(2+) is bound at residue Cys732.

It belongs to the vitamin-B12 independent methionine synthase family. Requires Zn(2+) as cofactor.

It catalyses the reaction 5-methyltetrahydropteroyltri-L-glutamate + L-homocysteine = tetrahydropteroyltri-L-glutamate + L-methionine. It participates in amino-acid biosynthesis; L-methionine biosynthesis via de novo pathway; L-methionine from L-homocysteine (MetE route): step 1/1. In terms of biological role, catalyzes the transfer of a methyl group from 5-methyltetrahydrofolate to homocysteine resulting in methionine formation. The protein is 5-methyltetrahydropteroyltriglutamate--homocysteine methyltransferase of Listeria innocua serovar 6a (strain ATCC BAA-680 / CLIP 11262).